Here is a 342-residue protein sequence, read N- to C-terminus: N-acetyl-gamma-glutamyl-phosphate reductase (342 aa).

C147 is an active-site residue.

Belongs to the NAGSA dehydrogenase family. Type 1 subfamily.

It is found in the cytoplasm. It catalyses the reaction N-acetyl-L-glutamate 5-semialdehyde + phosphate + NADP(+) = N-acetyl-L-glutamyl 5-phosphate + NADPH + H(+). The protein operates within amino-acid biosynthesis; L-arginine biosynthesis; N(2)-acetyl-L-ornithine from L-glutamate: step 3/4. In terms of biological role, catalyzes the NADPH-dependent reduction of N-acetyl-5-glutamyl phosphate to yield N-acetyl-L-glutamate 5-semialdehyde. The protein is N-acetyl-gamma-glutamyl-phosphate reductase of Methanosphaera stadtmanae (strain ATCC 43021 / DSM 3091 / JCM 11832 / MCB-3).